The chain runs to 200 residues: 3-isopropylmalate dehydratase small subunit (200 aa).

The protein belongs to the LeuD family. LeuD type 1 subfamily. Heterodimer of LeuC and LeuD.

It carries out the reaction (2R,3S)-3-isopropylmalate = (2S)-2-isopropylmalate. It participates in amino-acid biosynthesis; L-leucine biosynthesis; L-leucine from 3-methyl-2-oxobutanoate: step 2/4. Its function is as follows. Catalyzes the isomerization between 2-isopropylmalate and 3-isopropylmalate, via the formation of 2-isopropylmaleate. This Campylobacter jejuni subsp. jejuni serotype O:23/36 (strain 81-176) protein is 3-isopropylmalate dehydratase small subunit.